The sequence spans 687 residues: Cytochrome b/c1 (687 aa).

A helical membrane pass occupies residues 46–66; that stretch reads FGAILSFMLGMQILTGVILAM. Residues H96 and H110 each coordinate heme b. The next 2 helical transmembrane spans lie at 126–146 and 160–180; these read VLWILGVIIYLLMMATGFMGY and VITNLFSAIPYFGESIVTLLW. Heme b-binding residues include H197 and H211. Helical transmembrane passes span 199 to 219, 247 to 267, 305 to 325, 337 to 357, 363 to 383, and 410 to 430; these read LLPFLIAGVVVLHVWALHVAG, FGVACFLLLYAWFIFYMPNYL, LAGVIGMFSAIIILCFLPWLD, LAKQFFWIFVAVCILLGYLGA, IYVIAGRVLTVCYFAYFLIVL, and AVASVAIALVAAGALFLGSLQ. An internal signal sequence region spans residues 404–434; the sequence is LAKGGKAVASVAIALVAAGALFLGSLQDARA. The Cytochrome c domain occupies 458–643; it reads GALQRGLKVY…TVAQYSKDVT (186 aa). Heme c-binding residues include C471, C474, H475, and M616. Residues 666 to 678 traverse the membrane as a helical segment; sequence VFLIIFAGLMYFT.

This sequence belongs to the cytochrome b family. The main subunits of complex b-c1 are: cytochrome b, cytochrome c1 and the Rieske protein. Heme b is required as a cofactor. Requires heme c as cofactor. The protein is post-translationally processed into cytochrome b and c1. This occurs by processing between residues 434 and 435 without processing between cytochrome b and the N-terminal of the putative signal sequence domain.

It is found in the cell inner membrane. Its function is as follows. Component of the ubiquinol-cytochrome c reductase complex (complex III or cytochrome b-c1 complex), which is a respiratory chain that generates an electrochemical potential coupled to ATP synthesis. c1 functions as an electron donor to cytochrome c. The chain is Cytochrome b/c1 (fbcH) from Bradyrhizobium diazoefficiens (strain JCM 10833 / BCRC 13528 / IAM 13628 / NBRC 14792 / USDA 110).